The sequence spans 278 residues: HTH-type transcriptional regulator ExsA (278 aa).

Residues 171–269 (ERLQLFMEKH…GCTPSRSRQG (99 aa)) form the HTH araC/xylS-type domain. 2 consecutive DNA-binding regions (H-T-H motif) follow at residues 188–209 (SDFS…GSVY) and 236–259 (IVDI…RRRF).

In terms of assembly, homodimer. Interacts with ExsD; this interaction inhibits ExsA activity.

In the absence of inducing signals such as low Ca(2+) or host cell contact, the T3SS/injectisome is expressed at a low basal level and exists in a quiescent state due to ExsA sequestration by ExsD in a 1:1 complex. Upon host cell contact, this interaction is disrupted by the anti-antiactivator protein ExsC leading to ExsA activation. Functionally, transcriptional regulator that plays an essential role in the activation the type III secretion system (T3SS) operons. In addition, ExsA directly regulates the transcription of ImpA virulence factor that cooperatively inhibits the functions of host macrophages together with the T3SS. The protein is HTH-type transcriptional regulator ExsA (exsA) of Pseudomonas aeruginosa (strain ATCC 15692 / DSM 22644 / CIP 104116 / JCM 14847 / LMG 12228 / 1C / PRS 101 / PAO1).